A 716-amino-acid polypeptide reads, in one-letter code: Cyclic nucleotide-gated ion channel 1 (716 aa).

At 1 to 97 (MNFRQEKFVR…QGPFLQRWNK (97 aa)) the chain is on the cytoplasmic side. The chain crosses the membrane as a helical span at residues 98 to 118 (IFVLACIIAVSLDPLFFYVPI). Residues 119-132 (IDDAKKCLGIDKKM) lie on the Extracellular side of the membrane. A helical transmembrane segment spans residues 133 to 153 (EITASVLRSFTDVFYVLHIIF). At 154–187 (QFRTGFIAPSSRVFGRGVLVEDKREIAKRYLSSH) the chain is on the cytoplasmic side. The chain crosses the membrane as a helical span at residues 188–208 (FIIDILAVLPLPQMVILIIIP). The Extracellular segment spans residues 209 to 220 (HMRGSSSLNTKN). A helical membrane pass occupies residues 221–241 (MLKFIVFFQYIPRFIRIYPLY). The Cytoplasmic portion of the chain corresponds to 242–259 (KEVTRTSGILTETAWAGA). A helical membrane pass occupies residues 260 to 280 (AFNLFLYMLASHVFGAFWYLF). Residues 281–379 (SIERETVCWK…GQNLKTSTYI (99 aa)) are Extracellular-facing. A helical transmembrane segment spans residues 380 to 400 (WEICFAVFISIAGLVLFSFLI). The Cytoplasmic portion of the chain corresponds to 401–716 (GNMQTYLQST…PAEPDFNSDD (316 aa)). A nucleoside 3',5'-cyclic phosphate-binding positions include 486–610 (MFEK…SKQL) and glutamate 557. The interval 602-617 (FRRLHSKQLRHTFRYY) is calmodulin-binding. One can recognise an IQ domain in the interval 622–651 (KTWAACFIQAAWRRYIKKKLEESLKEEENR). Residues 689–716 (SVRKPRMPERMPPMLLQKPAEPDFNSDD) are disordered.

The protein belongs to the cyclic nucleotide-gated cation channel (TC 1.A.1.5) family. In terms of assembly, homotetramer or heterotetramer (Potential). Binds calmodulin-2/3/5 with a higher affinity than calmodulin-1/4. As to expression, expressed in the whole plant but only weakly in roots.

It is found in the cell membrane. Acts as a cyclic nucleotide-gated ion channel. Can be activated by cyclic AMP which leads to an opening of the cation channel. May be responsible for cAMP-induced calcium entry in cells and thus should be involved in the calcium signal transduction. Could transport K(+), Na(+) and Pb(2+). In Arabidopsis thaliana (Mouse-ear cress), this protein is Cyclic nucleotide-gated ion channel 1 (CNGC1).